Here is a 282-residue protein sequence, read N- to C-terminus: Peptidoglycan-recognition protein LD (282 aa).

A disordered region spans residues 1–29 (MDSSHIAVRVARRSPSPAAVSQSSYGSLG). At 1–88 (MDSSHIAVRV…RRNPTLHEDC (88 aa)) the chain is on the cytoplasmic side. A helical transmembrane segment spans residues 89 to 111 (FNWRSVGLLVMCASALALAAYLL). Over 112-282 (WRQTQTPDFG…PHYASHQTSK (171 aa)) the chain is Extracellular. A disulfide bond links cysteine 162 and cysteine 166. Asparagine 222 carries an N-linked (GlcNAc...) asparagine glycan.

This sequence belongs to the N-acetylmuramoyl-L-alanine amidase 2 family. As to expression, expressed in uninduced hemocytes and mbn-2 cells.

The protein localises to the cell membrane. Peptidoglycan-recognition protein probably involved in innate immunity by binding to peptidoglycans (PGN) of bacteria and activating the immune response. The chain is Peptidoglycan-recognition protein LD (PGRP-LD) from Drosophila melanogaster (Fruit fly).